The primary structure comprises 269 residues: Ribonuclease HII (269 aa).

Residues 83-269 enclose the RNase H type-2 domain; the sequence is YLIAGVDEVG…HRMSFLTNIL (187 aa). A divalent metal cation is bound by residues aspartate 89, glutamate 90, and aspartate 185.

This sequence belongs to the RNase HII family. Mn(2+) serves as cofactor. Mg(2+) is required as a cofactor.

It localises to the cytoplasm. It catalyses the reaction Endonucleolytic cleavage to 5'-phosphomonoester.. Its function is as follows. Endonuclease that specifically degrades the RNA of RNA-DNA hybrids. This is Ribonuclease HII from Clostridium botulinum (strain Loch Maree / Type A3).